A 220-amino-acid chain; its full sequence is Peptidoglycan hydrolase gp5 (220 aa).

It belongs to the peptidase U40 family. Monomer.

It is found in the virion. Muralytic enzyme exposed to host peptidoglycan layer after membrane fusion during viral entry. Functions as an exolysin that cleaves the peptide bridge formed by meso-diaminopimelic acid and D-alanine. Also lyses the host cell late in infection to release the virions. This is Peptidoglycan hydrolase gp5 (P5) from Pseudomonas savastanoi pv. phaseolicola (Pseudomonas syringae pv. phaseolicola).